Consider the following 269-residue polypeptide: Ribosomal RNA small subunit methyltransferase A (269 aa).

Histidine 11, leucine 13, glycine 38, glutamate 59, aspartate 84, and asparagine 105 together coordinate S-adenosyl-L-methionine.

Belongs to the class I-like SAM-binding methyltransferase superfamily. rRNA adenine N(6)-methyltransferase family. RsmA subfamily.

Its subcellular location is the cytoplasm. It carries out the reaction adenosine(1518)/adenosine(1519) in 16S rRNA + 4 S-adenosyl-L-methionine = N(6)-dimethyladenosine(1518)/N(6)-dimethyladenosine(1519) in 16S rRNA + 4 S-adenosyl-L-homocysteine + 4 H(+). Specifically dimethylates two adjacent adenosines (A1518 and A1519) in the loop of a conserved hairpin near the 3'-end of 16S rRNA in the 30S particle. May play a critical role in biogenesis of 30S subunits. The sequence is that of Ribosomal RNA small subunit methyltransferase A from Acaryochloris marina (strain MBIC 11017).